The sequence spans 714 residues: DNA ligase (714 aa).

NAD(+) contacts are provided by residues 47–51, 96–97, and Glu-128; these read DAEYD and SL. The active-site N6-AMP-lysine intermediate is Lys-130. Arg-151, Glu-188, Lys-306, and Lys-330 together coordinate NAD(+). 4 residues coordinate Zn(2+): Cys-435, Cys-438, Cys-453, and Cys-459. The region spanning 637 to 714 is the BRCT domain; sequence RRDTAVAGKT…TEDEWLALIS (78 aa).

This sequence belongs to the NAD-dependent DNA ligase family. LigA subfamily. Mg(2+) serves as cofactor. Requires Mn(2+) as cofactor.

The catalysed reaction is NAD(+) + (deoxyribonucleotide)n-3'-hydroxyl + 5'-phospho-(deoxyribonucleotide)m = (deoxyribonucleotide)n+m + AMP + beta-nicotinamide D-nucleotide.. Its function is as follows. DNA ligase that catalyzes the formation of phosphodiester linkages between 5'-phosphoryl and 3'-hydroxyl groups in double-stranded DNA using NAD as a coenzyme and as the energy source for the reaction. It is essential for DNA replication and repair of damaged DNA. This Rhodopseudomonas palustris (strain HaA2) protein is DNA ligase.